The following is a 1058-amino-acid chain: Bromodomain-containing protein 1 (1058 aa).

A compositionally biased stretch (basic residues) spans 1 to 12 (MRRKGRCHRGSA). The tract at residues 1–25 (MRRKGRCHRGSAARHPSSPCSIKHS) is disordered. The interaction with KAT7/HBO1 and histones stretch occupies residues 31–80 (LTYAQAQRMVEIEIEGRLHRISIFDPLEIILEDDLTAQEMSECNSNKENS). Ser128 is modified (phosphoserine). The PHD-type 1 zinc-finger motif lies at 214–264 (DAVCCICMDGECQNSNVILFCDMCNLAVHQECYGVPYIPEGQWLCRHCLQS). Residues 268-301 (PADCVLCPNKGGAFKKTDDDRWGHVVCALWIPEV) form a C2HC pre-PHD-type zinc finger. A PHD-type 2 zinc finger spans residues 325 to 389 (LTCYLCKQKG…RKTAYCDVHT (65 aa)). An N6-acetyllysine mark is found at Lys368, Lys516, and Lys519. Residues Lys554 and Lys594 each participate in a glycyl lysine isopeptide (Lys-Gly) (interchain with G-Cter in SUMO2) cross-link. The Bromo domain occupies 562–666 (LRLTPLTVLL…DQGGVVLRQA (105 aa)). Residues 754 to 763 (KLSQQHSQAP) are compositionally biased toward polar residues. 2 disordered regions span residues 754–776 (KLSQQHSQAPPTGAGTGGFEDEA) and 791–847 (LETL…AAPR). Ser803 is subject to Phosphoserine. N6-acetyllysine is present on Lys903. Positions 929–1012 (PLKVVWAKCS…KSKMVPLGVD (84 aa)) constitute a PWWP domain. A phosphoserine mark is found at Ser1052 and Ser1055.

As to quaternary structure, component of some HBO1 complexes composed of KAT7/HBO1, MEAF6, ING4 and BRD1/BRPF2. Component of the MOZ/MORF complex composed at least of ING5, KAT6A, KAT6B, MEAF6 and one of BRPF1, BRD1/BRPF2 and BRPF3. Interacts (via PHD-type zinc finger domain) with unmodified histone H3. Interacts (via PWWP domain) with dimethylated and trimethylated 'Lys-79' on histone H3.

The protein localises to the nucleus. Its subcellular location is the chromosome. In terms of biological role, scaffold subunit of various histone acetyltransferase (HAT) complexes, such as the MOZ/MORF and HBO1 complexes, that acts as a regulator of hematopoiesis. Plays a key role in HBO1 complex by directing KAT7/HBO1 specificity towards histone H3 'Lys-14' acetylation (H3K14ac), thereby promoting erythroid differentiation. The protein is Bromodomain-containing protein 1 of Mus musculus (Mouse).